A 1838-amino-acid polypeptide reads, in one-letter code: Collagen alpha-1(V) chain (1838 aa).

A signal peptide spans 1–36 (MDVHTRWKAARPGALLLSSPLLLFLLLLWAPPSSRA). The region spanning 72 to 244 (DVAYRVSKDA…DYCEHYSPDC (173 aa)) is the Laminin G-like domain. Residues 231–443 (RAAYDYCEHY…MPANQDTIFE (213 aa)) are nonhelical region. Sulfotyrosine occurs at positions 234, 236, 240, 262, and 263. 2 disordered regions span residues 242-545 (PDCD…QESQ) and 559-1574 (GPAG…EVIQ). The span at 258–268 (NPDEYYPEGEG) shows a compositional bias: acidic residues. 4 stretches are compositionally biased toward low complexity: residues 335 to 345 (DYDYVPPDDYY), 374 to 387 (VPTS…TSNP), 413 to 428 (YDPY…VSPS), and 460 to 469 (IIEPGMLIEG). Residues 444–558 (GIGGPRGEKG…ILQQARLALR (115 aa)) are interrupted collagenous region. The segment covering 470–485 (PPGPEGPAGLPGPPGT) has biased composition (pro residues). Low complexity-rich tracts occupy residues 506-523 (LPGA…LMLP) and 559-570 (GPAGPMGLTGRP). Residues 559–1570 (GPAGPMGLTG…GLPGPPGPPG (1012 aa)) are triple-helical region. 3 positions are modified to 4-hydroxyproline: Pro570, Pro576, and Pro621. Lys627 carries the post-translational modification 5-hydroxylysine. Residue Pro639 is modified to 4-hydroxyproline. Residue Lys642 is modified to 5-hydroxylysine. A 4-hydroxyproline mark is found at Pro648, Pro654, Pro657, Pro675, and Pro678. Over residues 671–686 (PRGLPGEPGPRGLLGP) the composition is skewed to low complexity. Pro680 and Pro686 each carry 3-hydroxyproline. The segment covering 687–696 (KGPPGPPGPP) has biased composition (pro residues). 4-hydroxyproline occurs at positions 690, 696, and 705. Position 708 is a 5-hydroxylysine (Lys708). Residues Pro717, Pro720, Pro726, and Pro732 each carry the 4-hydroxyproline modification. Residues 722 to 741 (QQGNPGAQGLPGPQGAIGPP) show a composition bias toward low complexity. Lys744 carries the 5-hydroxylysine modification. Over residues 747–756 (LGKPGLPGMP) the composition is skewed to low complexity. Residues Pro750, Pro756, Pro762, Pro765, and Pro771 each carry the 4-hydroxyproline modification. Lys774 bears the 5-hydroxylysine mark. A 4-hydroxyproline mark is found at Pro780 and Pro789. 4 positions are modified to 5-hydroxylysine: Lys795, Lys804, Lys807, and Lys810. At Pro816 the chain carries 4-hydroxyproline. A 5-hydroxylysine modification is found at Lys819. Pro834 carries the post-translational modification 4-hydroxyproline. The span at 837–846 (RGEDGPEGPK) shows a compositional bias: basic and acidic residues. 5-hydroxylysine is present on residues Lys846 and Lys864. Pro870, Pro873, and Pro876 each carry 4-hydroxyproline. Position 882 is a 5-hydroxylysine (Lys882). 2 positions are modified to 4-hydroxyproline: Pro888 and Pro891. At Lys897 the chain carries 5-hydroxylysine. 2 positions are modified to 4-hydroxyproline: Pro903 and Pro906. Residues 908-917 (PRGQRGPTGP) are compositionally biased toward low complexity. 2 positions are modified to 4-hydroxyproline: Pro930 and Pro945. Composition is skewed to low complexity over residues 971-990 (KDGL…QGKT) and 999-1011 (VGPQ…TGPM). Pro1017, Pro1020, Pro1023, and Pro1029 each carry 4-hydroxyproline. Residues 1088–1104 (SPGERGPAGAAGPIGIP) are compositionally biased toward low complexity. Residues 1106–1115 (RPGPQGPPGP) are compositionally biased toward pro residues. 4-hydroxyproline occurs at positions 1221 and 1224. The segment covering 1259–1268 (PSGAPGADGP) has biased composition (low complexity). Residues 1294-1303 (GLPGEGGPLG) are compositionally biased toward gly residues. 2 stretches are compositionally biased toward pro residues: residues 1380–1398 (TGEP…PGPA) and 1454–1469 (SPGP…PPGL). 4-hydroxyproline occurs at positions 1467 and 1470. Positions 1485–1494 (PGLIGLIGPP) are enriched in low complexity. Residues 1526-1541 (PLGPPGPPGLPGPPGP) show a composition bias toward pro residues. Over residues 1542 to 1554 (KGAKGSSGPTGPK) the composition is skewed to low complexity. Positions 1571–1605 (EVIQPLPIQASRTRRNIDASQLLDDGAGESYVDYA) are nonhelical region. 2 positions are modified to sulfotyrosine: Tyr1601 and Tyr1604. The Fibrillar collagen NC1 domain occupies 1609–1837 (EEIFGSLNSL…GFEVGPACFL (229 aa)).

This sequence belongs to the fibrillar collagen family. In terms of assembly, trimers of two alpha 1(V) and one alpha 2(V) chains in most tissues and trimers of one alpha 1(V), one alpha 2(V), and one alpha 3(V) chains in placenta. Interacts with CSPG4. Post-translationally, hydroxylation on proline residues within the sequence motif, GXPG, is most likely to be 4-hydroxy as this fits the requirement for 4-hydroxylation in vertebrates. In terms of processing, sulfated on 40% of tyrosines. Widely expressed. Isoform 2 is more highly expressed in liver, kidney and lung.

The protein localises to the secreted. It is found in the extracellular space. It localises to the extracellular matrix. Type V collagen is a member of group I collagen (fibrillar forming collagen). It is a minor connective tissue component of nearly ubiquitous distribution. Type V collagen binds to DNA, heparan sulfate, thrombospondin, heparin, and insulin. Transcriptionally activated by CEBPZ, which recognizes a CCAAT-like motif, CAAAT in the COL5A1 promoter. This chain is Collagen alpha-1(V) chain (Col5a1), found in Mus musculus (Mouse).